A 545-amino-acid chain; its full sequence is T-complex protein 1 subunit gamma (545 aa).

An N-acetylmethionine modification is found at M1. Residues 1–24 (MMGHRPVLVLSQNTKRESGRKVQS) form a disordered region. S11 bears the Phosphoserine mark. Residue K15 forms a Glycyl lysine isopeptide (Lys-Gly) (interchain with G-Cter in SUMO2) linkage. ADP is bound at residue G42. Position 42 (G42) interacts with ATP. Residue D93 coordinates Mg(2+). The ADP site is built by G94, T95, T96, S97, T162, and K163. ATP contacts are provided by G94, T95, and T96. S170 carries the phosphoserine modification. An N6-acetyllysine modification is found at K222. 2 positions are modified to phosphoserine: S243 and S244. Y247 is modified (phosphotyrosine). Glycyl lysine isopeptide (Lys-Gly) (interchain with G-Cter in SUMO2) cross-links involve residues K248 and K249. The residue at position 252 (S252) is a Phosphoserine. An intrachain disulfide couples C366 to C372. A Glycyl lysine isopeptide (Lys-Gly) (interchain with G-Cter in SUMO2) cross-link involves residue K381. G411 is an ADP binding site. G411 is a binding site for ATP. A phosphothreonine mark is found at T430 and T459. The ADP site is built by G482, E483, E497, and K502. G482 is a binding site for ATP. Residue E497 coordinates ATP. A disordered region spans residues 526–545 (HKKKGDDQSRQGGAPDAGQE).

The protein belongs to the TCP-1 chaperonin family. In terms of assembly, component of the chaperonin-containing T-complex (TRiC), a hexadecamer composed of two identical back-to-back stacked rings enclosing a protein folding chamber. Each ring is made up of eight different subunits: TCP1/CCT1, CCT2, CCT3, CCT4, CCT5, CCT6A/CCT6, CCT7, CCT8. Interacts with PACRG. Interacts with DNAAF4. Interacts with DLEC1.

Its subcellular location is the cytoplasm. The enzyme catalyses ATP + H2O = ADP + phosphate + H(+). Functionally, component of the chaperonin-containing T-complex (TRiC), a molecular chaperone complex that assists the folding of actin, tubulin and other proteins upon ATP hydrolysis. The TRiC complex mediates the folding of WRAP53/TCAB1, thereby regulating telomere maintenance. As part of the TRiC complex may play a role in the assembly of BBSome, a complex involved in ciliogenesis regulating transports vesicles to the cilia. The polypeptide is T-complex protein 1 subunit gamma (CCT3) (Homo sapiens (Human)).